Reading from the N-terminus, the 418-residue chain is UDP-N-acetylglucosamine 1-carboxyvinyltransferase (418 aa).

Position 22-23 (22-23 (KN)) interacts with phosphoenolpyruvate. Arginine 92 provides a ligand contact to UDP-N-acetyl-alpha-D-glucosamine. Cysteine 116 acts as the Proton donor in catalysis. Cysteine 116 carries the post-translational modification 2-(S-cysteinyl)pyruvic acid O-phosphothioketal. Residues 121–125 (RPIDL), aspartate 305, and leucine 327 each bind UDP-N-acetyl-alpha-D-glucosamine.

Belongs to the EPSP synthase family. MurA subfamily.

The protein resides in the cytoplasm. The catalysed reaction is phosphoenolpyruvate + UDP-N-acetyl-alpha-D-glucosamine = UDP-N-acetyl-3-O-(1-carboxyvinyl)-alpha-D-glucosamine + phosphate. Its pathway is cell wall biogenesis; peptidoglycan biosynthesis. In terms of biological role, cell wall formation. Adds enolpyruvyl to UDP-N-acetylglucosamine. This chain is UDP-N-acetylglucosamine 1-carboxyvinyltransferase, found in Campylobacter jejuni (strain RM1221).